The sequence spans 440 residues: 6-phospho-alpha-glucosidase (440 aa).

4-70 (FSVVIAGGGS…PEIEFSYTTD (67 aa)) is a binding site for NAD(+). The substrate site is built by Arg-93 and Asn-147. Cys-169 contributes to the Mn(2+) binding site. Asp-170 functions as the Proton donor in the catalytic mechanism. His-200 contacts Mn(2+). The active-site Proton acceptor is the Tyr-263. Arg-283 contributes to the substrate binding site.

Homodimer. NAD(+) serves as cofactor. Mn(2+) is required as a cofactor. The cofactor is Co(2+). It depends on Ni(2+) as a cofactor.

It carries out the reaction alpha-maltose 6'-phosphate + H2O = D-glucose 6-phosphate + D-glucose. It functions in the pathway glycan biosynthesis; sucrose metabolism. In terms of biological role, is involved in the catabolism of alpha-glycosides accumulated via a phosphoenolpyruvate-dependent phosphotransferase system (PEP-PTS). Hydrolyzes a wide variety of 6-phospho-alpha-D-glucosides including maltose-6'-phosphate, isomaltose-6'-phosphate, maltitol-6-phosphate, trehalose-6-phosphate and the 6'-phosphorylated derivatives of the five linkage-isomeric alpha-D-glucosyl-D-fructoses: trehalulose-6'-phosphate, turanose-6'-phosphate, maltulose-6'-phosphate, leucrose-6'-phosphate, and palatinose-6'-phosphate. However, sucrose-6-phosphate is not a substrate for this enzyme. The sequence is that of 6-phospho-alpha-glucosidase from Klebsiella pneumoniae.